Consider the following 164-residue polypeptide: NADH-quinone oxidoreductase subunit I (164 aa).

4Fe-4S ferredoxin-type domains lie at 55-84 and 95-124; these read RRYE…IEID and KVYD…MGPY. Residues cysteine 64, cysteine 67, cysteine 70, cysteine 74, cysteine 104, cysteine 107, cysteine 110, and cysteine 114 each coordinate [4Fe-4S] cluster.

It belongs to the complex I 23 kDa subunit family. NDH-1 is composed of 14 different subunits. Subunits NuoA, H, J, K, L, M, N constitute the membrane sector of the complex. It depends on [4Fe-4S] cluster as a cofactor.

It is found in the cell inner membrane. The catalysed reaction is a quinone + NADH + 5 H(+)(in) = a quinol + NAD(+) + 4 H(+)(out). NDH-1 shuttles electrons from NADH, via FMN and iron-sulfur (Fe-S) centers, to quinones in the respiratory chain. The immediate electron acceptor for the enzyme in this species is believed to be ubiquinone. Couples the redox reaction to proton translocation (for every two electrons transferred, four hydrogen ions are translocated across the cytoplasmic membrane), and thus conserves the redox energy in a proton gradient. The sequence is that of NADH-quinone oxidoreductase subunit I from Magnetococcus marinus (strain ATCC BAA-1437 / JCM 17883 / MC-1).